Reading from the N-terminus, the 427-residue chain is MSSAPTDAFFRTPLSERDPEVFAAITQELKRQQDQIELIASENIVSRAVLEAQGSVMTNKYAEGYPGKRYYGGCEFVDIAESLAISRACQIFGCSYANVQPSSGSQANQGVFMALLQPGDTIMGMSLAAGGHLTHGAAPNQSGKWFKAVQYGVRQQDSQIDFAEVEELARTHRPKLIIAGGSAYPRTIDFARFRKIADEVGAFFMVDMAHFAGLVAGGVYPNPLPHAHVVTTTTHKTLRGPRGGMILSNDADIGKKINSAIFPGIQGGPLMHVIAGKAVAFGEALKPEFKLYAKQVVDNARALADTLVRRGLDIVSGGTDSHLMLVDLRPKKLTGKAAEASLEHAGMTCNKNGIPFDPEKPTITSGVRLGTPAATTRGFGVEEFKKVGELIGDVLDGLAANPEDNSAAEARARAEVAELCRRFPIYQ.

(6S)-5,6,7,8-tetrahydrofolate contacts are provided by residues Leu-127 and Gly-131–Leu-133. N6-(pyridoxal phosphate)lysine is present on Lys-236.

This sequence belongs to the SHMT family. In terms of assembly, homodimer. Requires pyridoxal 5'-phosphate as cofactor.

The protein resides in the cytoplasm. It catalyses the reaction (6R)-5,10-methylene-5,6,7,8-tetrahydrofolate + glycine + H2O = (6S)-5,6,7,8-tetrahydrofolate + L-serine. It functions in the pathway one-carbon metabolism; tetrahydrofolate interconversion. Its pathway is amino-acid biosynthesis; glycine biosynthesis; glycine from L-serine: step 1/1. In terms of biological role, catalyzes the reversible interconversion of serine and glycine with tetrahydrofolate (THF) serving as the one-carbon carrier. This reaction serves as the major source of one-carbon groups required for the biosynthesis of purines, thymidylate, methionine, and other important biomolecules. Also exhibits THF-independent aldolase activity toward beta-hydroxyamino acids, producing glycine and aldehydes, via a retro-aldol mechanism. In Paramagnetospirillum magneticum (strain ATCC 700264 / AMB-1) (Magnetospirillum magneticum), this protein is Serine hydroxymethyltransferase.